The sequence spans 588 residues: Ankyrin repeat and SOCS box protein 15 (588 aa).

11 ANK repeats span residues 75 to 104, 110 to 139, 143 to 172, 176 to 205, 209 to 238, 242 to 271, 275 to 304, 307 to 336, 349 to 378, 379 to 408, and 416 to 444; these read KGWF…KTLW, DGET…WPNT, KGET…SLDQ, KRWS…NVHL, FGVT…DVLA, DGAS…SGNI, AGHL…KHAI, SGLT…DVNS, ERKT…DPNL, DPLN…NVNC, and TRFP…QVEM. Residues 524 to 579 form the SOCS box domain; it reads WPEIRQILENPCSLKHLCRLKIRRLMGLQRLCQPTLMEKLSLPPTIQRYILFKEYD.

The protein belongs to the ankyrin SOCS box (ASB) family.

It participates in protein modification; protein ubiquitination. May be a substrate-recognition component of a SCF-like ECS (Elongin-Cullin-SOCS-box protein) E3 ubiquitin-protein ligase complex which mediates the ubiquitination and subsequent proteasomal degradation of target proteins. The protein is Ankyrin repeat and SOCS box protein 15 (ASB15) of Bos taurus (Bovine).